The sequence spans 243 residues: UTP--glucose-1-phosphate uridylyltransferase AglF (243 aa).

Belongs to the UDPGP type 2 family.

It carries out the reaction alpha-D-glucose 1-phosphate + UTP + H(+) = UDP-alpha-D-glucose + diphosphate. The protein operates within cell surface structure biogenesis; S-layer biogenesis. Its function is as follows. Involved in the assembly of a N-linked pentasaccharide that decorates the S-layer glycoprotein and flagellins. Involved in the biosynthesis of the hexuronic acid found at position 3 of the pentasaccharide. The polypeptide is UTP--glucose-1-phosphate uridylyltransferase AglF (aglF) (Haloferax volcanii (strain ATCC 29605 / DSM 3757 / JCM 8879 / NBRC 14742 / NCIMB 2012 / VKM B-1768 / DS2) (Halobacterium volcanii)).